The chain runs to 151 residues: Large ribosomal subunit protein bL9 (151 aa).

It belongs to the bacterial ribosomal protein bL9 family.

Its function is as follows. Binds to the 23S rRNA. In Lactobacillus delbrueckii subsp. bulgaricus (strain ATCC 11842 / DSM 20081 / BCRC 10696 / JCM 1002 / NBRC 13953 / NCIMB 11778 / NCTC 12712 / WDCM 00102 / Lb 14), this protein is Large ribosomal subunit protein bL9.